The sequence spans 111 residues: C-X-C motif chemokine 14 (111 aa).

An N-terminal signal peptide occupies residues 1-34; that stretch reads MSLLPRRAPPVSMRLLAAALLLLLLALYTARVDG. Intrachain disulfides connect cysteine 37/cysteine 63 and cysteine 39/cysteine 84. Positions 67–81 match the D-box motif; sequence MVIITTKSVSRYRGQ.

The protein belongs to the intercrine alpha (chemokine CxC) family. In terms of processing, ubiquitinated, followed by degradation by the proteasome. In terms of tissue distribution, expressed in heart, brain, placenta, lung, liver, skeletal muscle, kidney and pancreas. Highly expressed in normal tissue without inflammatory stimuli and infrequently expressed in cancer cell lines. Weakly expressed in monocyte-derived dendritic cells. Not detected in lung or unstimulated peripheral blood lymphocytes.

The protein resides in the secreted. Potent chemoattractant for neutrophils, and weaker for dendritic cells. Not chemotactic for T-cells, B-cells, monocytes, natural killer cells or granulocytes. Does not inhibit proliferation of myeloid progenitors in colony formation assays. The chain is C-X-C motif chemokine 14 (CXCL14) from Homo sapiens (Human).